The sequence spans 662 residues: Sodium/glucose cotransporter 1 (662 aa).

Topologically, residues 1-24 (MDSSTWSPATTATTEPLKPHERIR) are extracellular. Residues 25–47 (NAADISVIVIYFVVVMAVGLWAM) form a helical membrane-spanning segment. The Cytoplasmic segment spans residues 48 to 66 (CSTNRGTVGGFFLAGRSMV). Residues 67–90 (WWPVGASLFASNIGSGHFVGLAGT) form a helical membrane-spanning segment. Over 91 to 95 (GAAAG) the chain is Extracellular. The chain crosses the membrane as a helical span at residues 96 to 117 (IATGGFEWNALIWVVVLGWLFV). At 118-139 (PIYIKAGVVTMPEYLRKRFGGK) the chain is on the cytoplasmic side. Residues 140–169 (RIQVYLSILSLMLYIFTKISADIFSGAIFI) traverse the membrane as a helical segment. The Extracellular portion of the chain corresponds to 170-176 (TLALGLD). Residues 177-193 (LYLAIFLLLAITGLYTI) traverse the membrane as a helical segment. At 194-202 (TGGLAAVIY) the chain is on the cytoplasmic side. The helical transmembrane segment at 203 to 221 (TDTLQTAIMLVGSFILTGF) threads the bilayer. Over 222 to 275 (AFHEVGGYDAFMEKYMNAIPTVISDGNITIKKECYTPRADSFHIFRDPLKGDLP) the chain is Extracellular. An N-linked (GlcNAc...) asparagine glycan is attached at N248. 5 cysteine pairs are disulfide-bonded: C255–C511, C255–C608, C345–C351, C355–C361, and C517–C522. The helical transmembrane segment at 276–295 (WPGLTFGLSILALWYWCTDQ) threads the bilayer. Residues 296–309 (VIVQRCLSAKNMSH) lie on the Cytoplasmic side of the membrane. A helical transmembrane segment spans residues 310–331 (VKAGCVMCGYFKLLPMFVIVMP). At 332-375 (GMISRVLYTEKIACTVPSECEKYCGTKVGCSNIAYPTLVVELMP) the chain is on the extracellular side. Residues 376 to 406 (NGLRGLMLSVMLASLMSSLTSIFNSASTLFT) form a helical membrane-spanning segment. Topologically, residues 407 to 422 (MDVYTKIRKRASEKEL) are cytoplasmic. Residues 423-444 (MIAGRLFILVLIGISIAWVPIV) form a helical membrane-spanning segment. Topologically, residues 445 to 451 (QSAQSGQ) are extracellular. A helical transmembrane segment spans residues 452–477 (LFDYIQSVTSYLGPPIAAVFLLAIFC). Residues 478-481 (KRVN) are Cytoplasmic-facing. Residues 482–504 (EEGAFWGLVIGCMIGLARMITEF) form a helical membrane-spanning segment. The Extracellular portion of the chain corresponds to 505-525 (AYGTGSCVEPSNCPTIICGVH). Residues 526 to 547 (YLYFAIILFVISIIIVLVVSLF) form a helical membrane-spanning segment. Topologically, residues 548 to 642 (TKPIPDVHLY…TSEKPLWRTV (95 aa)) are cytoplasmic. T587 is subject to Phosphothreonine. Residues 643 to 660 (VNINGIILLTVAVFCHAY) traverse the membrane as a helical segment. Over 661-662 (FA) the chain is Extracellular.

The protein belongs to the sodium:solute symporter (SSF) (TC 2.A.21) family. N-glycosylation is not necessary for the cotransporter function.

The protein resides in the apical cell membrane. The catalysed reaction is D-glucose(out) + 2 Na(+)(out) = D-glucose(in) + 2 Na(+)(in). The enzyme catalyses D-galactose(out) + 2 Na(+)(out) = D-galactose(in) + 2 Na(+)(in). With respect to regulation, enhanced by the interaction with PDZK1IP1/MAP17; but unlike SLC5A2/SGLT2, PDZK1IP1 is not essential for SLC5A1 transporter activity. Possibly modulated by cholesterol binding. Electrogenic Na(+)-coupled sugar symporter that actively transports D-glucose or D-galactose at the plasma membrane, with a Na(+) to sugar coupling ratio of 2:1. Transporter activity is driven by a transmembrane Na(+) electrochemical gradient set by the Na(+)/K(+) pump. Has a primary role in the transport of dietary monosaccharides from enterocytes to blood. Responsible for the absorption of D-glucose or D-galactose across the apical brush-border membrane of enterocytes, whereas basolateral exit is provided by GLUT2. Additionally, functions as a D-glucose sensor in enteroendocrine cells, triggering the secretion of the incretins GCG and GIP that control food intake and energy homeostasis. Together with SGLT2, functions in reabsorption of D-glucose from glomerular filtrate, playing a nonredundant role in the S3 segment of the proximal tubules. Transports D-glucose into endometrial epithelial cells, controlling glycogen synthesis and nutritional support for the embryo as well as the decidual transformation of endometrium prior to conception. Acts as a water channel enabling passive water transport in response to the osmotic gradient created upon sugar and Na(+) uptake. Has high water conductivity comparable to aquaporins and therefore is expected to play an important role in transepithelial water permeability, especially in the small intestine. The polypeptide is Sodium/glucose cotransporter 1 (SLC5A1) (Sus scrofa (Pig)).